The sequence spans 348 residues: Protein RecA (348 aa).

Residue Gly65–Thr72 coordinates ATP.

Belongs to the RecA family.

It localises to the cytoplasm. Its function is as follows. Can catalyze the hydrolysis of ATP in the presence of single-stranded DNA, the ATP-dependent uptake of single-stranded DNA by duplex DNA, and the ATP-dependent hybridization of homologous single-stranded DNAs. It interacts with LexA causing its activation and leading to its autocatalytic cleavage. The polypeptide is Protein RecA (Alteromonas mediterranea (strain DSM 17117 / CIP 110805 / LMG 28347 / Deep ecotype)).